Reading from the N-terminus, the 375-residue chain is Response regulator aspartate phosphatase E (375 aa).

Residues 24–95 adopt a coiled-coil conformation; the sequence is NVTDAEMLKA…HKKKLDNMRA (72 aa). TPR repeat units lie at residues 96-129, 177-210, 219-252, 258-291, 297-330, and 333-366; these read YYYNFFRGMYEFRNGEYTRAITYYKKAERKIPTI, IQCHFVIAGNYDDLENHEKALPHLQEALKGAELL, ATAFFNLGNCYHKMDNLNKAARYIEQALVQYRKI, PQAYHDLALIYFKQGKKEQAMDCFRKGIRSAVDF, MNLFEALDVLYIRNGDTPKLLNIFSRLENGKGYP, and EELALLGGNLFDYNGKIEDSIICFKKMVYAQKQI.

Belongs to the Rap family.

Its subcellular location is the cytoplasm. Phosphatase activity is inhibited by the phosphatase regulator PhrE. Functionally, involved in the regulation of sporulation. Acts as a phosphatase that specifically dephosphorylates the sporulation initiation phosphotransferase Spo0F and inhibits its activity. Probably plays a dispensable role in the overall context of sporulation initiation. This is Response regulator aspartate phosphatase E (rapE) from Bacillus subtilis (strain 168).